The chain runs to 33 residues: uncharacterized protein (33 aa).

This is an uncharacterized protein from Archaeoglobus fulgidus (strain ATCC 49558 / DSM 4304 / JCM 9628 / NBRC 100126 / VC-16).